The chain runs to 293 residues: uncharacterized protein (293 aa).

Residues Thr-43 and Tyr-105 each act as charge relay system in the active site. The active-site Proton donor is the Tyr-131. Lys-159 (schiff-base intermediate with substrate) is an active-site residue.

Belongs to the DapA family. In terms of assembly, homotetramer.

Its subcellular location is the cytoplasm. This is an uncharacterized protein from Thermococcus onnurineus (strain NA1).